A 695-amino-acid chain; its full sequence is Serotransferrin (695 aa).

The first 19 residues, 1-19 (MRLAAGALLACAALGLCLA), serve as a signal peptide directing secretion. 2 consecutive Transferrin-like domains span residues 25 to 347 (VRWC…NLRE) and 361 to 680 (VKWC…NLRK). Cystine bridges form between Cys28-Cys67 and Cys38-Cys58. Arg42 carries the dimethylated arginine modification. Asp82 and Tyr114 together coordinate Fe(3+). 17 disulfide bridges follow: Cys137-Cys213, Cys156-Cys350, Cys177-Cys193, Cys180-Cys196, Cys190-Cys198, Cys246-Cys260, Cys358-Cys612, Cys364-Cys396, Cys374-Cys387, Cys421-Cys690, Cys436-Cys653, Cys468-Cys539, Cys492-Cys681, Cys502-Cys516, Cys513-Cys522, Cys579-Cys593, and Cys631-Cys636. Thr139, Arg143, Ala145, and Gly146 together coordinate hydrogencarbonate. Tyr207 is a Fe(3+) binding site. His268 is a binding site for Fe(3+). Ser389 is subject to Phosphoserine. The Fe(3+) site is built by Asp411 and Tyr444. Hydrogencarbonate contacts are provided by Thr470, Arg474, Ala476, and Gly477. Asn509 carries N-linked (GlcNAc...) asparagine glycosylation. Tyr533 provides a ligand contact to Fe(3+). Residue His601 participates in Fe(3+) binding. Position 682 is a phosphoserine (Ser682).

Belongs to the transferrin family. In terms of assembly, monomer. Part of a complex composed of SLC40A1/ferroportin, TF/transferrin and HEPH/hephaestin that transfers iron from cells to transferrin. In terms of tissue distribution, expressed by the liver and secreted in plasma.

The protein resides in the secreted. Its function is as follows. Transferrins are iron binding transport proteins which can bind two Fe(3+) ions in association with the binding of an anion, usually bicarbonate. It is responsible for the transport of iron from sites of absorption and heme degradation to those of storage and utilization. Serum transferrin may also have a further role in stimulating cell proliferation. This is Serotransferrin (TF) from Oryctolagus cuniculus (Rabbit).